Reading from the N-terminus, the 469-residue chain is MNPNQKIITIGSVSLIIATICFLMQIAILVTTVTLHFKQYECDSPANNQVMPCEPIIIERNITEIVYLTNTTIEKEICPKLVEYRNWSKPQCKITGFAPFSKDNSIRLSAGGDIWVTREPYVSCDPGKCYQFALGQGTTLDNKHSNDTIHDRTPHRTLLMNELGVPFHLGTRQVCIAWSSSSCHDGKAWLHVCVTGYDKNATASFIYDGRLVDSIGSWSQNILRTQESECVCINGTCTVVMTDGSASGRADTKILFIEEGKIVHISPLSGSAQHVEECSCYPRYPGVRCICRDNWKGSNRPVVDINVKDYSIDSSYVCSGLVGDTPRNNDRSSNSYCRNPNNEKGNHGVKGWAFDDGNDVWMGRTISEDSRSGYETFKVIGGWSTPNSKLQINRQVIVDSDNRSGYSGIFSVEGKSCINRCFYVELIRGREQETRVWWTSNSIVVFCGTSGTYGTGSWPDGADINLMPI.

Over 1-9 the chain is Intravirion; sequence MNPNQKIIT. Residues 10–30 form a helical membrane-spanning segment; sequence IGSVSLIIATICFLMQIAILV. The tract at residues 11-33 is involved in apical transport and lipid raft association; it reads GSVSLIIATICFLMQIAILVTTV. Residues 31–469 lie on the Virion surface side of the membrane; sequence TTVTLHFKQY…DGADINLMPI (439 aa). The segment at 36 to 88 is hypervariable stalk region; that stretch reads HFKQYECDSPANNQVMPCEPIIIERNITEIVYLTNTTIEKEICPKLVEYRNWS. Residues Asn-61, Asn-70, and Asn-86 are each glycosylated (N-linked (GlcNAc...) asparagine; by host). The head of neuraminidase stretch occupies residues 91 to 469; the sequence is QCKITGFAPF…DGADINLMPI (379 aa). Disulfide bonds link Cys-92–Cys-417, Cys-124–Cys-129, Cys-183–Cys-230, Cys-232–Cys-237, Cys-278–Cys-291, Cys-280–Cys-289, Cys-318–Cys-337, and Cys-421–Cys-447. Arg-118 contacts substrate. Asn-146 carries an N-linked (GlcNAc...) asparagine; by host glycan. Asp-151 functions as the Proton donor/acceptor in the catalytic mechanism. Arg-152 serves as a coordination point for substrate. N-linked (GlcNAc...) asparagine; by host glycans are attached at residues Asn-200 and Asn-234. A substrate-binding site is contributed by 276–277; that stretch reads EE. Arg-292 provides a ligand contact to substrate. 3 residues coordinate Ca(2+): Asp-293, Gly-297, and Asp-324. Arg-371 lines the substrate pocket. N-linked (GlcNAc...) asparagine; by host glycosylation is present at Asn-402. The active-site Nucleophile is the Tyr-406.

Belongs to the glycosyl hydrolase 34 family. As to quaternary structure, homotetramer. Ca(2+) serves as cofactor. N-glycosylated.

The protein resides in the virion membrane. It localises to the host apical cell membrane. It carries out the reaction Hydrolysis of alpha-(2-&gt;3)-, alpha-(2-&gt;6)-, alpha-(2-&gt;8)- glycosidic linkages of terminal sialic acid residues in oligosaccharides, glycoproteins, glycolipids, colominic acid and synthetic substrates.. Its activity is regulated as follows. Inhibited by the neuraminidase inhibitors zanamivir (Relenza) and oseltamivir (Tamiflu). These drugs interfere with the release of progeny virus from infected cells and are effective against all influenza strains. Resistance to neuraminidase inhibitors is quite rare. Catalyzes the removal of terminal sialic acid residues from viral and cellular glycoconjugates. Cleaves off the terminal sialic acids on the glycosylated HA during virus budding to facilitate virus release. Additionally helps virus spread through the circulation by further removing sialic acids from the cell surface. These cleavages prevent self-aggregation and ensure the efficient spread of the progeny virus from cell to cell. Otherwise, infection would be limited to one round of replication. Described as a receptor-destroying enzyme because it cleaves a terminal sialic acid from the cellular receptors. May facilitate viral invasion of the upper airways by cleaving the sialic acid moieties on the mucin of the airway epithelial cells. Likely to plays a role in the budding process through its association with lipid rafts during intracellular transport. May additionally display a raft-association independent effect on budding. Plays a role in the determination of host range restriction on replication and virulence. Sialidase activity in late endosome/lysosome traffic seems to enhance virus replication. The polypeptide is Neuraminidase (Aves (whales)).